Reading from the N-terminus, the 248-residue chain is Pulmonary surfactant-associated protein A (248 aa).

A signal peptide spans 1 to 20; sequence MLLCSLTLTLLWMVASGLEC. Residues 28-100 enclose the Collagen-like domain; sequence GSPGIPGTPG…PGERGPPGFP (73 aa). Positions 29 to 102 are disordered; the sequence is SPGIPGTPGS…ERGPPGFPAY (74 aa). P30, P33, P36, P42, P54, P57, P63, P67, and P70 each carry 4-hydroxyproline. The segment covering 42–51 has biased composition (basic and acidic residues); sequence PGRDGRDGIK. Over residues 54 to 65 the composition is skewed to pro residues; the sequence is PGPPGPMGPPGG. Positions 69-82 are enriched in low complexity; the sequence is LPGRDGMTGAPGLP. Residues 84 to 93 show a composition bias toward basic and acidic residues; the sequence is ERGEKGEPGE. The 117-residue stretch at 132-248 folds into the C-type lectin domain; sequence LAVGEKVFST…LQYRLAICEF (117 aa). 2 disulfides stabilise this stretch: C155–C246 and C224–C238. N-linked (GlcNAc...) asparagine glycosylation occurs at N207. E215, R217, N234, and D235 together coordinate Ca(2+).

Belongs to the SFTPA family. As to quaternary structure, oligomeric complex of 6 set of homotrimers.

The protein localises to the secreted. Its subcellular location is the extracellular space. It is found in the extracellular matrix. The protein resides in the surface film. In presence of calcium ions, it binds to surfactant phospholipids and contributes to lower the surface tension at the air-liquid interface in the alveoli of the mammalian lung and is essential for normal respiration. Enhances the expression of MYO18A/SP-R210 on alveolar macrophages. The sequence is that of Pulmonary surfactant-associated protein A (SFTPA1) from Bos taurus (Bovine).